The sequence spans 82 residues: MRVLSTVLAAKNKIALGAATMLVSAGSFAAEPNAATNYATEAMDSLKTQAIDLISQTWPVVTTVVVAGLVIRLFKKFSSKAV.

Positions 1–29 (MRVLSTVLAAKNKIALGAATMLVSAGSFA) are cleaved as a signal peptide. The Periplasmic portion of the chain corresponds to 30–54 (AEPNAATNYATEAMDSLKTQAIDLI). A helical membrane pass occupies residues 55 to 74 (SQTWPVVTTVVVAGLVIRLF). The Cytoplasmic segment spans residues 75–82 (KKFSSKAV).

Belongs to the inovirus capsid protein family. In terms of assembly, homomultimerizes. There are several thousands of this protein in the phage capsid.

Its subcellular location is the virion. The protein resides in the host membrane. Its function is as follows. Self assembles to form a helical capsid wrapping up the viral genomic DNA. The capsid displays a filamentous structure with a length of 760-1950 nm and a width of 6-8 nm. The virion assembly and budding take place at the host inner membrane. In Salmonella phage IKe (Bacteriophage IKe), this protein is Capsid protein G8P (VIII).